The following is a 91-amino-acid chain: UPF0298 protein M28_Spy0318 (91 aa).

The protein belongs to the UPF0298 family.

The protein localises to the cytoplasm. This chain is UPF0298 protein M28_Spy0318, found in Streptococcus pyogenes serotype M28 (strain MGAS6180).